The following is a 185-amino-acid chain: Elongation factor P (185 aa).

It belongs to the elongation factor P family.

It is found in the cytoplasm. The protein operates within protein biosynthesis; polypeptide chain elongation. Functionally, involved in peptide bond synthesis. Stimulates efficient translation and peptide-bond synthesis on native or reconstituted 70S ribosomes in vitro. Probably functions indirectly by altering the affinity of the ribosome for aminoacyl-tRNA, thus increasing their reactivity as acceptors for peptidyl transferase. This chain is Elongation factor P, found in Thermotoga petrophila (strain ATCC BAA-488 / DSM 13995 / JCM 10881 / RKU-1).